Consider the following 181-residue polypeptide: uncharacterized protein (181 aa).

2 helical membrane passes run 24–46 and 55–77; these read IAAVLISTSFVLFGFLALVLLNV and GIVAIVSLIAIWVLMTAGVYILL.

Its subcellular location is the cell membrane. This is an uncharacterized protein from Archaeoglobus fulgidus (strain ATCC 49558 / DSM 4304 / JCM 9628 / NBRC 100126 / VC-16).